We begin with the raw amino-acid sequence, 305 residues long: Putative S-adenosyl-L-methionine-dependent methyltransferase MAB_4607c (305 aa).

S-adenosyl-L-methionine is bound by residues Asp128 and 155 to 156 (DL).

The protein belongs to the UPF0677 family.

Its function is as follows. Exhibits S-adenosyl-L-methionine-dependent methyltransferase activity. In Mycobacteroides abscessus (strain ATCC 19977 / DSM 44196 / CCUG 20993 / CIP 104536 / JCM 13569 / NCTC 13031 / TMC 1543 / L948) (Mycobacterium abscessus), this protein is Putative S-adenosyl-L-methionine-dependent methyltransferase MAB_4607c.